The sequence spans 470 residues: MLNFFYVKYKSLFKIIAILTFNILCYCRTVHSISKNDYTISNNLKLYPYSFVNFRPSPEMSQILKKKKLDSSSSEDFIPTKRITTLEELKNYERLEERTKVTITKDKIPLFAKNDMFRNTVRNPLNSIDYYKNDESDIRTYILKRWDLLPSPLRDLITNESIDHSTVTHKIKYEDITTEEAFKLVVNDDIGVMVGFETVGHIAHLNVPEERSSIKKLIAKIIIDKHKHIKTVINKRSEVQNQFRTMDIELLAGEENYIANLVIFVILMSFSFQMKQSLLVDMFAGAGPFAIYASKKGCSVLANDLNPIGATYMKRNIEINKVHDLVKVFNMDGREFLIDVIKKNKILDKKTLECDGMALKASGKVHLIMNLPKIAIEFLGNLVMKHRFSDTLIGLADNIEEENMRKLLVHCYCFSASEEYEKEIEQRLYKSIGRKLPEYTITHVRGVSPKKQMYCIEFECPISILRGNKE.

S-adenosyl-L-methionine contacts are provided by residues 304 to 305 (DL), 332 to 333 (DG), and Asn-370.

It belongs to the class I-like SAM-binding methyltransferase superfamily. TRM5/TYW2 family. Monomer.

It is found in the mitochondrion matrix. It localises to the nucleus. The protein localises to the cytoplasm. The catalysed reaction is guanosine(37) in tRNA + S-adenosyl-L-methionine = N(1)-methylguanosine(37) in tRNA + S-adenosyl-L-homocysteine + H(+). Specifically methylates the N1 position of guanosine-37 in various cytoplasmic and mitochondrial tRNAs. Methylation is not dependent on the nature of the nucleoside 5' of the target nucleoside. This is the first step in the biosynthesis of wybutosine (yW), a modified base adjacent to the anticodon of tRNAs and required for accurate decoding. The sequence is that of tRNA (guanine(37)-N(1))-methyltransferase from Theileria parva (East coast fever infection agent).